Reading from the N-terminus, the 294-residue chain is 4-diphosphocytidyl-2-C-methyl-D-erythritol kinase (294 aa).

The active site involves Lys-16. 99 to 109 serves as a coordination point for ATP; it reads PMGAGLGGGSS. Residue Asp-141 is part of the active site.

This sequence belongs to the GHMP kinase family. IspE subfamily.

It carries out the reaction 4-CDP-2-C-methyl-D-erythritol + ATP = 4-CDP-2-C-methyl-D-erythritol 2-phosphate + ADP + H(+). The protein operates within isoprenoid biosynthesis; isopentenyl diphosphate biosynthesis via DXP pathway; isopentenyl diphosphate from 1-deoxy-D-xylulose 5-phosphate: step 3/6. Its function is as follows. Catalyzes the phosphorylation of the position 2 hydroxy group of 4-diphosphocytidyl-2C-methyl-D-erythritol. This Polynucleobacter asymbioticus (strain DSM 18221 / CIP 109841 / QLW-P1DMWA-1) (Polynucleobacter necessarius subsp. asymbioticus) protein is 4-diphosphocytidyl-2-C-methyl-D-erythritol kinase.